A 98-amino-acid polypeptide reads, in one-letter code: Phosphoribosyl-ATP pyrophosphatase (98 aa).

Belongs to the PRA-PH family.

It is found in the cytoplasm. The catalysed reaction is 1-(5-phospho-beta-D-ribosyl)-ATP + H2O = 1-(5-phospho-beta-D-ribosyl)-5'-AMP + diphosphate + H(+). It functions in the pathway amino-acid biosynthesis; L-histidine biosynthesis; L-histidine from 5-phospho-alpha-D-ribose 1-diphosphate: step 2/9. The chain is Phosphoribosyl-ATP pyrophosphatase from Pelotomaculum thermopropionicum (strain DSM 13744 / JCM 10971 / SI).